Consider the following 748-residue polypeptide: Glucans biosynthesis glucosyltransferase H (748 aa).

The next 7 membrane-spanning stretches (helical) occupy residues 85-107 (LIVR…GYGM), 127-149 (FLVL…FVLL), 443-465 (GIGS…LISL), 494-516 (AWVF…LVLI), 529-551 (GRVL…CMMI), 587-606 (LAGP…SVSL), and 608-630 (LLLW…IMTS).

The protein belongs to the glycosyltransferase 2 family. OpgH subfamily.

The protein localises to the cell inner membrane. It participates in glycan metabolism; osmoregulated periplasmic glucan (OPG) biosynthesis. Functionally, involved in the biosynthesis of osmoregulated periplasmic glucans (OPGs). The polypeptide is Glucans biosynthesis glucosyltransferase H (Bradyrhizobium diazoefficiens (strain JCM 10833 / BCRC 13528 / IAM 13628 / NBRC 14792 / USDA 110)).